The chain runs to 128 residues: MKFSLVATIVLLALAQGSFAQGAADLESLGQYFEEMKTKLIQDMTEIIRSQDLANQAQAFVEDKKTQLQPLVAQIQEQMKTVATNVEEQIRPLTANVQAHLQPQIDNFQKQMEAIIKKLTDQTMAIEN.

The first 20 residues, 1–20 (MKFSLVATIVLLALAQGSFA), serve as a signal peptide directing secretion. At Q21 the chain carries Pyrrolidone carboxylic acid.

This sequence belongs to the apolipoprotein A1/A4/E family.

The protein localises to the secreted. In terms of biological role, antifreeze proteins lower the blood freezing point. This Myoxocephalus octodecemspinosus (Longhorn sculpin) protein is Type-4 ice-structuring protein LS-12.